We begin with the raw amino-acid sequence, 151 residues long: Transcriptional repressor NrdR (151 aa).

Positions 1–21 (MRCPFCGEADTQVKDSRPTED) are disordered. A zinc finger spans residues 3–34 (CPFCGEADTQVKDSRPTEDGAAIRRRRFCPQC). Basic and acidic residues predominate over residues 11–21 (TQVKDSRPTED). The ATP-cone domain maps to 49–139 (LVVVKADQRR…VYRDFREAKD (91 aa)).

This sequence belongs to the NrdR family. The cofactor is Zn(2+).

Functionally, negatively regulates transcription of bacterial ribonucleotide reductase nrd genes and operons by binding to NrdR-boxes. In Acidiphilium cryptum (strain JF-5), this protein is Transcriptional repressor NrdR.